Reading from the N-terminus, the 445-residue chain is Inositol-pentakisphosphate 2-kinase IPK1 (445 aa).

ATP is bound by residues 19–22 and Arg-40; that span reads GAAN. Residue Arg-127 coordinates substrate. Residues 144-146 and 162-164 contribute to the ATP site; these read SDH and EIK. Positions 162-166 match the EXKPK motif motif; that stretch reads EIKAK. Substrate-binding residues include Lys-166, Lys-196, and Asn-234. Residue Arg-237 coordinates ATP. Zn(2+)-binding residues include His-312, Cys-322, Cys-325, and His-341. Asp-363 contacts substrate. Asp-402 contributes to the ATP binding site. Substrate is bound by residues Lys-406, Lys-410, and Tyr-414.

Belongs to the IPK1 type 2 family. Zn(2+) serves as cofactor.

It catalyses the reaction 1D-myo-inositol 1,3,4,5,6-pentakisphosphate + ATP = 1D-myo-inositol hexakisphosphate + ADP + H(+). Its function is as follows. Phosphorylates Ins(1,3,4,5,6)P5 at position 2 to form Ins(1,2,3,4,5,6)P6 (InsP6 or phytate). Phytate is a regulator of intracellular signaling, a highly abundant animal antinutrient, and a phosphate store in plant seeds. Also phosphorylates Ins(1,3,4,6)P4 and Ins(1,4,5,6)P4 to produce Ins(1,2,3,4,6)P5 and Ins(1,2,4,5,6)P5. This Oryza sativa subsp. indica (Rice) protein is Inositol-pentakisphosphate 2-kinase IPK1.